The sequence spans 324 residues: RING-H2 finger protein ATL3 (324 aa).

Residues 24-44 form a helical membrane-spanning segment; it reads IILTAIIVLFMAVLFVLILHL. An RING-type; atypical zinc finger spans residues 127–169; that stretch reads CSICLSELVKGDKARLLPKCNHSFHVECIDMWFQSHSTCPICR. Disordered stretches follow at residues 179 to 210, 226 to 248, and 299 to 324; these read SSKR…STSS, VSTG…ASQS, and RDKR…SVDP. Composition is skewed to polar residues over residues 192-210 and 226-235; these read NAGT…STSS and VSTGNTNVGT. The span at 306–324 shows a compositional bias: low complexity; that stretch reads SNSSTSNSSSSNAVASVDP.

It belongs to the RING-type zinc finger family. ATL subfamily.

It is found in the membrane. The enzyme catalyses S-ubiquitinyl-[E2 ubiquitin-conjugating enzyme]-L-cysteine + [acceptor protein]-L-lysine = [E2 ubiquitin-conjugating enzyme]-L-cysteine + N(6)-ubiquitinyl-[acceptor protein]-L-lysine.. It functions in the pathway protein modification; protein ubiquitination. In Arabidopsis thaliana (Mouse-ear cress), this protein is RING-H2 finger protein ATL3 (ATL3).